Here is a 671-residue protein sequence, read N- to C-terminus: Zinc finger protein 568 (671 aa).

The interval 1-31 (MERLSQMAGRRAWCAEDSVPRQEEEDRTRPS) is disordered. The segment covering 18–29 (SVPRQEEEDRTR) has biased composition (basic and acidic residues). KRAB domains lie at 34–105 (VTFK…RRSP) and 124–195 (LRFE…IWHP). Residues 214–366 (EKMAKKHTCP…QGSERPHKCK (153 aa)) are disordered. Basic and acidic residues-rich tracts occupy residues 226-251 (EDSK…EGHL), 296-312 (IERE…EHAQ), and 329-341 (RPQE…ERKK). 11 C2H2-type zinc fingers span residues 363-385 (HKCK…QKLH), 391-413 (YKCQ…HRVH), 419-441 (FECK…QRIH), 447-469 (HKCK…LLTH), 475-497 (FECK…QMSH), 503-525 (HKCK…QSVH), 531-553 (YKCK…QRAH), 559-581 (YKCK…QKVH), 587-609 (HKCK…ERSH), 615-637 (YECK…QKIH), and 643-665 (YKCQ…QRIH).

The protein belongs to the krueppel C2H2-type zinc-finger protein family. As to quaternary structure, interacts with TRIM28. In terms of tissue distribution, little or no expression detected in most adult tissues (brain, liver, kidney, spleen, testis, ovary). In the hippocampus, detected in neural stem cells within the subventricular zone and subgranular zone.

It is found in the nucleus. Functionally, has transcriptional repression activity, partially through the recruitment of the corepressor TRIM28 but also has repression activity independently of this interaction. Essential during embryonic development, where it acts as direct repressor of IGF2-P0, placental-specific transcript of IGF2, in early development and regulates convergent extension movements required for axis elongation and tissue morphogenesis in all germ layers. Also important for normal morphogenesis of extraembryonic tissues including the yolk sac, extraembryonic mesoderm and placenta. May enhance proliferation or maintenance of neural stem cells. The polypeptide is Zinc finger protein 568 (Mus musculus (Mouse)).